The chain runs to 693 residues: ATP-dependent DNA helicase RecG (693 aa).

The tract at residues 48 to 146 is wedge domain; the sequence is THLYPIGELL…GDLSTPELQE (99 aa). The 166-residue stretch at 283-448 folds into the Helicase ATP-binding domain; that stretch reads DMALDVPMMR…AYADLDTSVI (166 aa). ATP is bound at residue 296–303; sequence GDVGSGKT. The DEAH box motif lies at 397 to 400; the sequence is DEQH. The region spanning 482-628 is the Helicase C-terminal domain; that stretch reads EGRQAYWVCT…GFVIAQKDLE (147 aa).

This sequence belongs to the helicase family. RecG subfamily. As to quaternary structure, monomer.

It carries out the reaction Couples ATP hydrolysis with the unwinding of duplex DNA by translocating in the 3'-5' direction.. The enzyme catalyses ATP + H2O = ADP + phosphate + H(+). In terms of biological role, plays a critical role in recombination and DNA repair. Helps process Holliday junction intermediates to mature products by catalyzing branch migration. Has replication fork regression activity, unwinds stalled or blocked replication forks to make a HJ that can be resolved. Has a DNA unwinding activity characteristic of a DNA helicase with 3'-5' polarity. Its function is as follows. Plays a role in recovery after DNA ADP-ribosylation. In Escherichia coli O127:H6 (strain E2348/69 / EPEC), this protein is ATP-dependent DNA helicase RecG.